Consider the following 126-residue polypeptide: Late histone H2A.L3 (126 aa).

A disordered region spans residues 1–20; the sequence is MSGRGKGAGKARAKAKSRSA. Ser-2 carries the N-acetylserine modification. Position 2 is a phosphoserine (Ser-2). Basic residues predominate over residues 7–19; the sequence is GAGKARAKAKSRS. The residue at position 105 (Gln-105) is an N5-methylglutamine. Lys-120 is covalently cross-linked (Glycyl lysine isopeptide (Lys-Gly) (interchain with G-Cter in ubiquitin)).

The protein belongs to the histone H2A family. As to quaternary structure, the nucleosome is a histone octamer containing two molecules each of H2A, H2B, H3 and H4 assembled in one H3-H4 heterotetramer and two H2A-H2B heterodimers. The octamer wraps approximately 147 bp of DNA. Monoubiquitination of Lys-120 gives a specific tag for epigenetic transcriptional repression. Post-translationally, phosphorylation of Ser-2 directly represses transcription.

It localises to the nucleus. The protein resides in the chromosome. In terms of biological role, core component of nucleosome. Nucleosomes wrap and compact DNA into chromatin, limiting DNA accessibility to the cellular machineries which require DNA as a template. Histones thereby play a central role in transcription regulation, DNA repair, DNA replication and chromosomal stability. DNA accessibility is regulated via a complex set of post-translational modifications of histones, also called histone code, and nucleosome remodeling. The polypeptide is Late histone H2A.L3 (Strongylocentrotus purpuratus (Purple sea urchin)).